The chain runs to 160 residues: Ureidoglycolate lyase (160 aa).

It belongs to the ureidoglycolate lyase family. In terms of assembly, homodimer. Ni(2+) is required as a cofactor.

The catalysed reaction is (S)-ureidoglycolate = urea + glyoxylate. The protein operates within nitrogen metabolism; (S)-allantoin degradation. In terms of biological role, catalyzes the catabolism of the allantoin degradation intermediate (S)-ureidoglycolate, generating urea and glyoxylate. Involved in the anaerobic utilization of allantoin as sole nitrogen source. Reinforces the induction of genes involved in the degradation of allantoin and glyoxylate by producing glyoxylate. The protein is Ureidoglycolate lyase of Escherichia coli (strain K12 / MC4100 / BW2952).